Here is a 517-residue protein sequence, read N- to C-terminus: MAHLLLAVVAITLALSQSVFGGSPYSNPHFTGSRSVITHLMQWKFDDIAAECERFLGPKGYGGIQLSPVNEHAVLGNRPWYELYQPVGYKIQSRSGNEEQFKGMVQRCNKVGVRIYVDIVMNHMSGAQEGHGNCWFKLQWHHDVSRCSLLVPNDFHGRESCHTDNMDIKNYDNPEEARNCRLSGLRDLKQSSEYVRQKQADFLNHLIDLGVAGSRSDASKHMWPGDLEAIYGKLHNLNTAYFPANSRPFIYHEVIYYGGDGIKSSDYTKLGRAIEFHFYRDIANVVRRHNQLKTVKNFGQPWGMVPSDDALVMVDSHDLQRFHTGQVGVNINYFESRLLKVATAFMLAWPYGVPRVMSSYHWDQKIEDGKDKNDWIGPPSDGSGNILSVTPQPDDTCNKEWICEHRWRQIYNMVHFRNVAGNEAVSHWWDNGDYQIAFGRGSKAFIAINLQDGQGLNRKLATGLPQGTYCDLVTGNLAGGKCTGGTVTVDGSGNADINIAKTAEDPFVAIHVEAKLH.

A signal peptide spans 1–21 (MAHLLLAVVAITLALSQSVFG). C52 and C108 form a disulfide bridge. Ca(2+)-binding residues include N122, R178, and D187. Chloride is bound at residue R215. D217 (nucleophile) is an active-site residue. H221 is a binding site for Ca(2+). The active-site Proton donor is the E253. R355 contributes to the chloride binding site. Intrachain disulfides connect C397-C403 and C470-C482.

It belongs to the glycosyl hydrolase 13 family. As to quaternary structure, monomer. Requires Ca(2+) as cofactor. Chloride serves as cofactor.

The protein localises to the secreted. It catalyses the reaction Endohydrolysis of (1-&gt;4)-alpha-D-glucosidic linkages in polysaccharides containing three or more (1-&gt;4)-alpha-linked D-glucose units.. Activated by chloride ions. Inhibited by acarbose. Not inhibited by wheat alpha-amylase inhibitors 1 (WI-1, the tetrameric form) or 3 (WI-3, the monomeric form) and bean alpha-amylase inhibitor 1 (alphaAI-1). The sequence is that of Alpha-amylase from Acarus siro (Flour mite).